We begin with the raw amino-acid sequence, 111 residues long: Putative lipid-binding protein AIR1 (111 aa).

The N-terminal stretch at 1–23 is a signal peptide; that stretch reads MAPRTPLALFVSLNLLFFTYTSA. 3 disulfides stabilise this stretch: C28/C58, C38/C57, and C74/C110.

This sequence belongs to the plant LTP family. PEARLI1 subfamily.

Its subcellular location is the secreted. The protein is Putative lipid-binding protein AIR1 (AIR1) of Arabidopsis thaliana (Mouse-ear cress).